The sequence spans 254 residues: Germin-like protein 4-1 (254 aa).

The N-terminal stretch at Met1–Ala27 is a signal peptide. Cys37 and Cys52 are oxidised to a cystine. One can recognise a Cupin type-1 domain in the interval Lys67 to Asp220. Residues His115, His117, Glu122, and His166 each coordinate Mn(2+).

This sequence belongs to the germin family. Oligomer (believed to be a pentamer but probably hexamer).

Its subcellular location is the secreted. It localises to the extracellular space. It is found in the apoplast. May play a role in plant defense. Probably has no oxalate oxidase activity even if the active site is conserved. The chain is Germin-like protein 4-1 from Oryza sativa subsp. japonica (Rice).